Here is a 260-residue protein sequence, read N- to C-terminus: Putative ABC transporter ATP-binding protein PYRAB01300 (260 aa).

Positions 2-234 constitute an ABC transporter domain; the sequence is IEFKDVWFWY…DLRNFSLVEP (233 aa). 34 to 41 contacts ATP; that stretch reads GPNGSGKT.

Belongs to the ABC transporter superfamily.

Its subcellular location is the cell membrane. Its function is as follows. Probably part of an ABC transporter complex. Responsible for energy coupling to the transport system. This is Putative ABC transporter ATP-binding protein PYRAB01300 from Pyrococcus abyssi (strain GE5 / Orsay).